The primary structure comprises 438 residues: Keratin, type I cytoskeletal 18 (438 aa).

Residues 4–83 form a head region; the sequence is AVSSRSTVVS…TLSGNAVISN (80 aa). The segment at 84-119 is coil 1A; the sequence is EKETMQDLNDRLSNYLETVRRLENANQQLEIQIREA. The IF rod domain maps to 84–395; that stretch reads EKETMQDLND…HLLGGEDSDT (312 aa). Positions 120–136 are linker 1; that stretch reads MEKRGPSVRDYSNYEKI. The interval 137–228 is coil 1B; that stretch reads IKELRDQIYD…KNHEDEVIAL (92 aa). The segment at 229–252 is linker 12; the sequence is RNQVNSCGVQVDLDAPKGTDLAEI. Residues 253–393 form a coil 2 region; sequence MATLRAEYEA…YRHLLGGEDS (141 aa). The segment at 394–438 is tail; that stretch reads DTLSLQDALSAMKVSNVQTVQKIVVTTQKLVDGKVVEDSTVTETK.

Belongs to the intermediate filament family. Heterotetramer of two type I and two type II keratins. Keratin-18 associates with keratin-8. In terms of processing, phosphorylated. Proteolytically cleaved by caspases during epithelial cell apoptosis. Expressed at low levels in skin.

Functionally, when phosphorylated, plays a role in filament reorganization. This Protopterus aethiopicus (Marbled lungfish) protein is Keratin, type I cytoskeletal 18.